The chain runs to 413 residues: Putative competence-damage inducible protein (413 aa).

It belongs to the CinA family.

This is Putative competence-damage inducible protein from Desulforudis audaxviator (strain MP104C).